A 347-amino-acid polypeptide reads, in one-letter code: NADH-ubiquinone oxidoreductase chain 2 (347 aa).

The next 11 membrane-spanning stretches (helical) occupy residues 1–21 (MNPL…LITA), 25–45 (HWFL…PVLT), 55–75 (AAIK…MAIL), 96–116 (TMML…FWVP), 123–143 (TLMS…SIMY), 145–165 (IFPV…IMVG), 178–198 (ILAY…PYNP), 200–220 (ITIF…LALN), 237–257 (LTWL…LPPL), 274–294 (GTLI…YFYM), and 324–344 (FLLP…PLTF).

Belongs to the complex I subunit 2 family. As to quaternary structure, core subunit of respiratory chain NADH dehydrogenase (Complex I) which is composed of 45 different subunits. Interacts with TMEM242.

It is found in the mitochondrion inner membrane. The enzyme catalyses a ubiquinone + NADH + 5 H(+)(in) = a ubiquinol + NAD(+) + 4 H(+)(out). Core subunit of the mitochondrial membrane respiratory chain NADH dehydrogenase (Complex I) which catalyzes electron transfer from NADH through the respiratory chain, using ubiquinone as an electron acceptor. Essential for the catalytic activity and assembly of complex I. This chain is NADH-ubiquinone oxidoreductase chain 2, found in Hylobates lar (Lar gibbon).